The sequence spans 305 residues: Ornithine carbamoyltransferase, catabolic (305 aa).

Carbamoyl phosphate is bound by residues serine 50–threonine 53, glutamine 77, arginine 101, and histidine 128–glutamine 131. L-ornithine-binding positions include asparagine 159, aspartate 223, and serine 227 to methionine 228. Carbamoyl phosphate contacts are provided by residues cysteine 263–leucine 264 and arginine 291.

It belongs to the aspartate/ornithine carbamoyltransferase superfamily. OTCase family.

The protein localises to the cytoplasm. It carries out the reaction carbamoyl phosphate + L-ornithine = L-citrulline + phosphate + H(+). The protein operates within amino-acid degradation; L-arginine degradation via ADI pathway; carbamoyl phosphate from L-arginine: step 2/2. In terms of biological role, reversibly catalyzes the transfer of the carbamoyl group from carbamoyl phosphate (CP) to the N(epsilon) atom of ornithine (ORN) to produce L-citrulline. In Thermoplasma volcanium (strain ATCC 51530 / DSM 4299 / JCM 9571 / NBRC 15438 / GSS1), this protein is Ornithine carbamoyltransferase, catabolic.